The sequence spans 408 residues: Argininosuccinate synthase (408 aa).

8–16 (AYSGGLDTT) lines the ATP pocket. Tyr86 contributes to the L-citrulline binding site. An ATP-binding site is contributed by Gly116. 3 residues coordinate L-aspartate: Thr118, Asn122, and Asp123. Residue Asn122 participates in L-citrulline binding. Residues Arg126, Ser177, Ser186, Glu263, and Tyr275 each coordinate L-citrulline.

The protein belongs to the argininosuccinate synthase family. Type 1 subfamily. Homotetramer.

It is found in the cytoplasm. It catalyses the reaction L-citrulline + L-aspartate + ATP = 2-(N(omega)-L-arginino)succinate + AMP + diphosphate + H(+). Its pathway is amino-acid biosynthesis; L-arginine biosynthesis; L-arginine from L-ornithine and carbamoyl phosphate: step 2/3. The chain is Argininosuccinate synthase from Agathobacter rectalis (strain ATCC 33656 / DSM 3377 / JCM 17463 / KCTC 5835 / VPI 0990) (Eubacterium rectale).